The primary structure comprises 289 residues: ATP synthase subunit a (289 aa).

6 helical membrane-spanning segments follow: residues 43–63 (AFHV…VLIF), 101–121 (SAVI…MNAV), 160–180 (LSVF…GGFI), 193–213 (LFVQ…TLIA), 232–252 (VFIL…GLGV), and 259–279 (AVFH…LTIV).

The protein belongs to the ATPase A chain family. F-type ATPases have 2 components, CF(1) - the catalytic core - and CF(0) - the membrane proton channel. CF(1) has five subunits: alpha(3), beta(3), gamma(1), delta(1), epsilon(1). CF(0) has three main subunits: a(1), b(2) and c(9-12). The alpha and beta chains form an alternating ring which encloses part of the gamma chain. CF(1) is attached to CF(0) by a central stalk formed by the gamma and epsilon chains, while a peripheral stalk is formed by the delta and b chains.

It localises to the cell inner membrane. Functionally, key component of the proton channel; it plays a direct role in the translocation of protons across the membrane. The polypeptide is ATP synthase subunit a (Pseudomonas savastanoi pv. phaseolicola (strain 1448A / Race 6) (Pseudomonas syringae pv. phaseolicola (strain 1448A / Race 6))).